Here is a 271-residue protein sequence, read N- to C-terminus: Gasdermin bGSDM (271 aa).

Cysteine 7 carries the S-palmitoyl cysteine lipid modification. The next 4 beta stranded transmembrane spans lie at 74–90 (IAGT…GLSV), 102–120 (TLGV…FEFS), 168–185 (RINV…GLNL), and 194–210 (ANVK…TVSF).

The protein belongs to the bacterial gasdermin family. Monomer. In terms of assembly, forms large, homooligomeric ring-shaped pores when inserted in membranes. Post-translationally, palmitoylation helps stabilize the inactive state; may self palmitoylate. Palmitoylation plays a significant role in pore formation.

The protein resides in the cytoplasm. The protein localises to the cell inner membrane. Its activity is regulated as follows. The full-length protein before cleavage is inactive: intramolecular interactions between the N-terminal domain and the C-terminal region as well as the lipid modification, mediate autoinhibition. The pyroptosis-like-inducing activity is carried by the released N-terminal domain (Gasdermin bGSDM, N-terminus). In terms of biological role, involved in defense against bacteriophages. When this probable 4 gene operon (bGSDM-FE772_23060-FE772_23065-FE772_23070) is inserted into E.coli it provides nearly 100-fold protection against phages T5 and T6 and about 8-fold against phage T4. The operon without bGSDM no longer protects against phage. Cleavage of this precursor by its dedicated protease(s) releases the active moiety (gasdermin bGSDM, N-terminus) which inserts into membranes, forming pores and triggering cell death. Functionally, pore-forming protein that causes membrane permeabilization via a pyroptosis-like activity. Makes ring-like pores when released. The chain is Gasdermin bGSDM from Lysobacter enzymogenes.